The primary structure comprises 217 residues: MKFFVDTANVEDIKKANDMGVICGVTTNPSLIAKEGRDFNEVIKEITSIVDGPISGEVKATTVDAEGMIKEGREIAAIHPNMVVKIPMTVEGLKAVKVLSSEGIKTNVTLIFSANQAILAANAGATYVSPFLGRLDDISQPGIELIRQISEIFDIYGYDTEIIAASIRNPIHVTDCALAGADIATIPYKVIEQMTKHPLTDQGIEKFQADYRAVFGD.

The Schiff-base intermediate with substrate role is filled by Lys-85.

The protein belongs to the transaldolase family. Type 3B subfamily.

Its subcellular location is the cytoplasm. It catalyses the reaction D-sedoheptulose 7-phosphate + D-glyceraldehyde 3-phosphate = D-erythrose 4-phosphate + beta-D-fructose 6-phosphate. It participates in carbohydrate degradation; pentose phosphate pathway; D-glyceraldehyde 3-phosphate and beta-D-fructose 6-phosphate from D-ribose 5-phosphate and D-xylulose 5-phosphate (non-oxidative stage): step 2/3. In terms of biological role, transaldolase is important for the balance of metabolites in the pentose-phosphate pathway. This is Probable transaldolase from Agathobacter rectalis (strain ATCC 33656 / DSM 3377 / JCM 17463 / KCTC 5835 / VPI 0990) (Eubacterium rectale).